Consider the following 206-residue polypeptide: Platelet glycoprotein Ib beta chain (206 aa).

The N-terminal stretch at 1–26 is a signal peptide; that stretch reads MGSRPRGALSLLLLLLALLSRPASGC. Disulfide bonds link cysteine 26–cysteine 32 and cysteine 30–cysteine 39. An LRRNT domain is found at 27–55; the sequence is PAPCSCAGTLVDCGRRGLTWASLPAAFPP. Residues 27–147 are Extracellular-facing; that stretch reads PAPCSCAGTL…RAACAPGLLC (121 aa). The LRR repeat unit spans residues 60-83; that stretch reads LVLTGNNLTALPPGLLDALPALRA. N-linked (GlcNAc...) asparagine glycosylation is present at asparagine 66. Positions 89–143 constitute an LRRCT domain; sequence NPWRCDCRLLPLRAWLAGRPERAPYRDLRCVAPPALRGRLLPYVAEDELRAACAP. Intrachain disulfides connect cysteine 93–cysteine 118 and cysteine 95–cysteine 141. Residues 148–172 form a helical membrane-spanning segment; that stretch reads WGALVAQLALLVLGLLHALLLALLL. Topologically, residues 173–206 are cytoplasmic; that stretch reads GRLRRLRARARARSIQEFSLTAPLVAESARGGAS. A phosphoserine mark is found at serine 186 and serine 191. Residue threonine 193 is modified to Phosphothreonine. The residue at position 200 (serine 200) is a Phosphoserine.

Two GP-Ib beta are disulfide-linked to one GP-Ib alpha. GP-IX is complexed with the GP-Ib heterodimer via a non covalent linkage. Interacts with TRAF4.

The protein resides in the membrane. Gp-Ib, a surface membrane protein of platelets, participates in the formation of platelet plugs by binding to von Willebrand factor, which is already bound to the subendothelium. This is Platelet glycoprotein Ib beta chain (Gp1bb) from Mus musculus (Mouse).